The following is a 62-amino-acid chain: Coiled-coil domain-containing protein YLR146W-A (62 aa).

The stretch at glutamate 14 to glutamate 49 forms a coiled coil.

The polypeptide is Coiled-coil domain-containing protein YLR146W-A (Saccharomyces cerevisiae (strain ATCC 204508 / S288c) (Baker's yeast)).